We begin with the raw amino-acid sequence, 158 residues long: GTP-dependent dephospho-CoA kinase (158 aa).

GTP is bound by residues aspartate 35, valine 36, aspartate 54, lysine 56, glutamate 109, and aspartate 132.

Belongs to the GTP-dependent DPCK family.

The catalysed reaction is 3'-dephospho-CoA + GTP = GDP + CoA + H(+). Its pathway is cofactor biosynthesis; coenzyme A biosynthesis. In terms of biological role, catalyzes the GTP-dependent phosphorylation of the 3'-hydroxyl group of dephosphocoenzyme A to form coenzyme A (CoA). This chain is GTP-dependent dephospho-CoA kinase, found in Methanococcus vannielii (strain ATCC 35089 / DSM 1224 / JCM 13029 / OCM 148 / SB).